A 510-amino-acid polypeptide reads, in one-letter code: ATAKAAPTEVSSILESKIRGVSDEANLDETGRVLSVGDGIARVFGLNNCQAEELVEFASGVKGMALNLEPGQVGIVLFGSDREVKEGEIVKRTGKIVDVPIGPGMLGRVVDALGNPIDGKGPIEATGYAIAQLKAPGILPRRSVFEPMQTGLKAVDALVPIGRGQRELIIGDRQTGKTAVALDTILNQKRWNDGNDESKKLYCVYVAVGQKRSTVAQLVQTLEQNDAMKYSIVVAATASEAAPLQYLAPFTACAIAEWFRDNGKHALIVYDDLSKQAVAYRQLSLLLRRPPGREAYPGDVFYLHSRLLERAAKMSDANGGGSLTALPVIETQGGDVSAYIPTNVISITDGQIFLEAELFYKGIRPAINVGLSVSRVGSAAQVKAMKQVAGSLKLFLAQYREVAAFAQFGSDLDASTKQTLSRGERLTQLLKQKQYSPQASEEQVPVIYAGVNGFLDNIPIERIPEFEEQFIAYLKANEGDILEAIRTKGELSSELLDKLKSATETFVATF.

171 to 178 serves as a coordination point for ATP; the sequence is GDRQTGKT.

As to quaternary structure, F-type ATP synthases have 2 components, the catalytic core F(1) and the membrane-embedded component F(0), linked together by a central stalk and a peripheral stalk. The central stalk, also called rotor shaft, is often seen as part of F(1). The peripheral stalk is seen as part of F(0). F(0) contains the membrane channel next to the rotor. F-type ATP synthases form dimers but each monomer functions independently in ATP generation. The dimer consists of 18 different polypeptides: ATP1 (subunit alpha, part of F(1), 3 molecules per monomer), ATP2 (subunit beta, part of F(1), 3 molecules per monomer), ATP3 (subunit gamma, part of the central stalk), ATP4 (subunit b, part of the peripheral stalk), ATP5/OSCP (subunit 5/OSCP, part of the peripheral stalk), ATP6 (subunit a, part of the peripheral stalk), ATP7 (subunit d, part of the peripheral stalk), ATP8 (subunit 8, part of the peripheral stalk), OLI1 (subunit c, part of the rotor, 10 molecules per monomer), ATP14 (subunit h, part of the peripheral stalk), ATP15 (subunit epsilon, part of the central stalk), ATP16 (subunit delta, part of the central stalk), ATP17 (subunit f, part of the peripheral stalk), ATP18 (subunit i/j, part of the peripheral stalk). Dimer-specific subunits are ATP19 (subunit k, at interface between monomers), ATP20 (subunit g, at interface between monomers), TIM11 (subunit e, at interface between monomers). Also contains subunit L.

The protein localises to the mitochondrion inner membrane. Functionally, mitochondrial membrane ATP synthase (F(1)F(0) ATP synthase or Complex V) produces ATP from ADP in the presence of a proton gradient across the membrane which is generated by electron transport complexes of the respiratory chain. F-type ATP synthases consist of two structural domains, F(1) - containing the extramembraneous catalytic core, and F(0) - containing the membrane proton channel, linked together by a central stalk and a peripheral stalk. During catalysis, ATP synthesis in the catalytic domain of F(1) is coupled via a rotary mechanism of the central stalk subunits to proton translocation. Subunits alpha/ATP1 and beta/ATP2 form the catalytic core in F(1). Rotation of the central stalk against the surrounding alpha/ATP1(3)beta/ATP2(3) subunits leads to hydrolysis of ATP in three separate catalytic sites on the beta/ATP2 subunits. Subunit alpha/ATP1 does not bear the catalytic high-affinity ATP-binding sites. The sequence is that of ATP synthase subunit alpha, mitochondrial from Pichia angusta (Yeast).